Consider the following 141-residue polypeptide: MTKTAKVNEIVRDWVVLDAKDKVFGRLITEIAVLLRGKHRPFYTPNVDCGDFVVVINANKVKFSGMKLEDKEYFTHSGYFGSTKSKTLQEMLEKTPEKLYHLAVRGMLPKTKLGKAMIKKLKVYRDDKHPHTAQTSKKDAK.

This sequence belongs to the universal ribosomal protein uL13 family. As to quaternary structure, part of the 50S ribosomal subunit.

In terms of biological role, this protein is one of the early assembly proteins of the 50S ribosomal subunit, although it is not seen to bind rRNA by itself. It is important during the early stages of 50S assembly. In Helicobacter pylori (strain Shi470), this protein is Large ribosomal subunit protein uL13.